A 297-amino-acid chain; its full sequence is Calponin-1 (297 aa).

The Calponin-homology (CH) domain maps to 28–131 (HQREQELREW…STLLALASMA (104 aa)). 3 Calponin-like repeats span residues 164–189 (IGLQ…RHLY), 204–229 (ISLQ…RQIF), and 243–268 (VSLQ…RQVY). T170 bears the Phosphothreonine; by ROCK2 mark. S175 bears the Phosphoserine; by ROCK2 mark. A phosphothreonine; by ROCK2 mark is found at T180 and T184. T259 is modified (phosphothreonine; by ROCK2).

This sequence belongs to the calponin family. Part of cGMP kinase signaling complex at least composed of ACTA2/alpha-actin, CNN1/calponin H1, PLN/phospholamban, PRKG1 and ITPR1.

In terms of biological role, thin filament-associated protein that is implicated in the regulation and modulation of smooth muscle contraction. It is capable of binding to actin, calmodulin and tropomyosin. The interaction of calponin with actin inhibits the actomyosin Mg-ATPase activity. The protein is Calponin-1 (CNN1) of Ovis aries (Sheep).